The following is an 851-amino-acid chain: MEGDTRRMWTQSESESIRSSKVRPLPLRKVTLYLTFVLIGVADTTYLDHAGTTLYAKSLIESFSRELTSNLFGNPHSLSASSQLSTRRVDDVRLRALRFFKADPDEFDLVFVANATAAIKLVADGMRDSTRQGFWYGYHVDAHTSLVGVRELAEKGGRCFTSDDEVEDWISKLCDVRSESLKLFAYPAQSNMNGRRLPLSWCKKIRNQGETAGGNVYTLLDAASLVSTSTLDLSDAAAAPDFTVLSFYKIFGFPDLGALIVRKSAGQIFEHRRYFGGGTVDMVLTRGLQWHAKKQSSIHDRLEDGTLPFHDIIALDSAFATHERLFGSMQNISSHTRFLAKRLYDRLNALRHFNGQRVCELYKSPRSDYNQPSTQGPIIAFNLRNSQGSWIGKSEVERLAAMRNIQIRSGSLCNPGGTSGSLGWTGADLLQQFSAGLRCGDDHDVMDGRPTGVLRLSLGAMTNLEDINTFVEFVEEFYVEKVATMDSLVTPVHSVPLQQPRFYIESLSLYPIKSCGPFRVPDGRRWEVRREGLAWDREWCLIHQGTGAALNQKKYPRMALIRPSIDLDRNVLRVTCEEPGSTNQKLLEVSLLREDTELATTSLCQRTSKASTVCGDQVTVQAYTSPSVAQFFSDFLGVPCTLARFGPHSSTRYASPRKAPGAWKQYLRKFVMPGSFPQEPSPPPAEKNPILLSNESPILLISRSSVNHLNENIKANQKRNRTGTSKAVAADVFRANIVVAESLADSPKVEQPYIEDQWEALKIGPGELQFDVLGSCQRCSMVCIDQFTGVRRDEPFSTLAKTRKINNKIVFGRHCSLSASEVTKEQHDNAERWTLMVGDIVTPSYAHDYDL.

Residue K249 is modified to N6-(pyridoxal phosphate)lysine. C413 is an active-site residue. Residues 665 to 844 (QYLRKFVMPG…LMVGDIVTPS (180 aa)) form the MOSC domain.

It belongs to the class-V pyridoxal-phosphate-dependent aminotransferase family. MOCOS subfamily. It depends on pyridoxal 5'-phosphate as a cofactor.

The catalysed reaction is Mo-molybdopterin + L-cysteine + AH2 = thio-Mo-molybdopterin + L-alanine + A + H2O. It functions in the pathway cofactor biosynthesis; molybdopterin biosynthesis. Sulfurates the molybdenum cofactor. Sulfation of molybdenum is essential for xanthine dehydrogenase (XDH) and aldehyde oxidase (ADO) enzymes in which molybdenum cofactor is liganded by 1 oxygen and 1 sulfur atom in active form. The protein is Molybdenum cofactor sulfurase of Neosartorya fischeri (strain ATCC 1020 / DSM 3700 / CBS 544.65 / FGSC A1164 / JCM 1740 / NRRL 181 / WB 181) (Aspergillus fischerianus).